Here is a 190-residue protein sequence, read N- to C-terminus: Xanthine phosphoribosyltransferase (190 aa).

The xanthine site is built by Leu-20 and Asn-27. Position 128–132 (128–132) interacts with 5-phospho-alpha-D-ribose 1-diphosphate; it reads ANGKA. Lys-156 provides a ligand contact to xanthine.

Belongs to the purine/pyrimidine phosphoribosyltransferase family. Xpt subfamily. As to quaternary structure, homodimer.

The protein localises to the cytoplasm. It catalyses the reaction XMP + diphosphate = xanthine + 5-phospho-alpha-D-ribose 1-diphosphate. The protein operates within purine metabolism; XMP biosynthesis via salvage pathway; XMP from xanthine: step 1/1. Its function is as follows. Converts the preformed base xanthine, a product of nucleic acid breakdown, to xanthosine 5'-monophosphate (XMP), so it can be reused for RNA or DNA synthesis. The sequence is that of Xanthine phosphoribosyltransferase from Pseudomonas entomophila (strain L48).